The sequence spans 71 residues: ATP synthase F(0) complex subunit e, mitochondrial (71 aa).

Residue lysine 34 is modified to N6-acetyllysine.

It belongs to the ATPase e subunit family. As to quaternary structure, component of the ATP synthase complex composed at least of ATP5F1A/subunit alpha, ATP5F1B/subunit beta, ATP5MC1/subunit c (homooctomer), MT-ATP6/subunit a, MT-ATP8/subunit 8, ATP5ME/subunit e, ATP5MF/subunit f, ATP5MG/subunit g, ATP5MK/subunit k, ATP5MJ/subunit j, ATP5F1C/subunit gamma, ATP5F1D/subunit delta, ATP5F1E/subunit epsilon, ATP5PF/subunit F6, ATP5PB/subunit b, ATP5PD/subunit d, ATP5PO/subunit OSCP. ATP synthase complex consists of a soluble F(1) head domain (subunits alpha(3) and beta(3)) - the catalytic core - and a membrane F(0) domain - the membrane proton channel (subunits c, a, 8, e, f, g, k and j). These two domains are linked by a central stalk (subunits gamma, delta, and epsilon) rotating inside the F1 region and a stationary peripheral stalk (subunits F6, b, d, and OSCP).

The protein localises to the mitochondrion. It is found in the mitochondrion inner membrane. Its function is as follows. Subunit e, of the mitochondrial membrane ATP synthase complex (F(1)F(0) ATP synthase or Complex V) that produces ATP from ADP in the presence of a proton gradient across the membrane which is generated by electron transport complexes of the respiratory chain. ATP synthase complex consist of a soluble F(1) head domain - the catalytic core - and a membrane F(1) domain - the membrane proton channel. These two domains are linked by a central stalk rotating inside the F(1) region and a stationary peripheral stalk. During catalysis, ATP synthesis in the catalytic domain of F(1) is coupled via a rotary mechanism of the central stalk subunits to proton translocation. In vivo, can only synthesize ATP although its ATP hydrolase activity can be activated artificially in vitro. Part of the complex F(0) domain. In Bos taurus (Bovine), this protein is ATP synthase F(0) complex subunit e, mitochondrial.